A 488-amino-acid polypeptide reads, in one-letter code: Proline--tRNA ligase (488 aa).

It belongs to the class-II aminoacyl-tRNA synthetase family. ProS type 3 subfamily. Homodimer.

Its subcellular location is the cytoplasm. The enzyme catalyses tRNA(Pro) + L-proline + ATP = L-prolyl-tRNA(Pro) + AMP + diphosphate. Catalyzes the attachment of proline to tRNA(Pro) in a two-step reaction: proline is first activated by ATP to form Pro-AMP and then transferred to the acceptor end of tRNA(Pro). The protein is Proline--tRNA ligase of Borreliella afzelii (strain PKo) (Borrelia afzelii).